We begin with the raw amino-acid sequence, 367 residues long: UDP-N-acetylglucosamine--N-acetylmuramyl-(pentapeptide) pyrophosphoryl-undecaprenol N-acetylglucosamine transferase (367 aa).

Residues threonine 11–glycine 13, asparagine 125, arginine 163, serine 197, and glutamine 289 contribute to the UDP-N-acetyl-alpha-D-glucosamine site.

The protein belongs to the glycosyltransferase 28 family. MurG subfamily.

It is found in the cell membrane. The catalysed reaction is di-trans,octa-cis-undecaprenyl diphospho-N-acetyl-alpha-D-muramoyl-L-alanyl-D-glutamyl-meso-2,6-diaminopimeloyl-D-alanyl-D-alanine + UDP-N-acetyl-alpha-D-glucosamine = di-trans,octa-cis-undecaprenyl diphospho-[N-acetyl-alpha-D-glucosaminyl-(1-&gt;4)]-N-acetyl-alpha-D-muramoyl-L-alanyl-D-glutamyl-meso-2,6-diaminopimeloyl-D-alanyl-D-alanine + UDP + H(+). It functions in the pathway cell wall biogenesis; peptidoglycan biosynthesis. Its function is as follows. Cell wall formation. Catalyzes the transfer of a GlcNAc subunit on undecaprenyl-pyrophosphoryl-MurNAc-pentapeptide (lipid intermediate I) to form undecaprenyl-pyrophosphoryl-MurNAc-(pentapeptide)GlcNAc (lipid intermediate II). This chain is UDP-N-acetylglucosamine--N-acetylmuramyl-(pentapeptide) pyrophosphoryl-undecaprenol N-acetylglucosamine transferase, found in Clavibacter sepedonicus (Clavibacter michiganensis subsp. sepedonicus).